The following is a 41-amino-acid chain: U3-theraphotoxin-Hs1a (41 aa).

3 disulfides stabilise this stretch: cysteine 2–cysteine 16, cysteine 9–cysteine 37, and cysteine 17–cysteine 40.

The protein belongs to the neurotoxin 14 (magi-1) family. 01 (HNTX-16) subfamily. Expressed by the venom gland.

It localises to the secreted. Intracerebroventricular injection paralyzes mice. Has no effect on voltage-gated sodium currents. The polypeptide is U3-theraphotoxin-Hs1a (Cyriopagopus schmidti (Chinese bird spider)).